Here is a 327-residue protein sequence, read N- to C-terminus: Ferredoxin--NADP reductase (327 aa).

FAD-binding residues include Thr-18, Asp-37, Gln-45, Tyr-50, Ala-90, Phe-124, Asp-283, and Ser-324.

It belongs to the ferredoxin--NADP reductase type 2 family. In terms of assembly, homodimer. FAD serves as cofactor.

The catalysed reaction is 2 reduced [2Fe-2S]-[ferredoxin] + NADP(+) + H(+) = 2 oxidized [2Fe-2S]-[ferredoxin] + NADPH. This chain is Ferredoxin--NADP reductase, found in Saccharopolyspora erythraea (strain ATCC 11635 / DSM 40517 / JCM 4748 / NBRC 13426 / NCIMB 8594 / NRRL 2338).